A 265-amino-acid chain; its full sequence is Cytosolic Fe-S cluster assembly factor NUBP2 homolog (265 aa).

Position 22 to 29 (22 to 29) interacts with ATP; it reads GKGGVGKS. [4Fe-4S] cluster contacts are provided by C196 and C199.

This sequence belongs to the Mrp/NBP35 ATP-binding proteins family. NUBP2/CFD1 subfamily. Heterotetramer of 2 NUBP1 and 2 NUBP2 chains. Requires [4Fe-4S] cluster as cofactor.

Its subcellular location is the cytoplasm. In terms of biological role, component of the cytosolic iron-sulfur (Fe/S) protein assembly (CIA) machinery. Required for maturation of extramitochondrial Fe-S proteins. The NUBP1-NUBP2 heterotetramer forms a Fe-S scaffold complex, mediating the de novo assembly of an Fe-S cluster and its transfer to target apoproteins. The chain is Cytosolic Fe-S cluster assembly factor NUBP2 homolog from Trichoplax adhaerens (Trichoplax reptans).